We begin with the raw amino-acid sequence, 1399 residues long: DNA-directed RNA polymerase subunit beta' (1399 aa).

Residues Cys-71, Cys-73, Cys-86, and Cys-89 each coordinate Zn(2+). Mg(2+) contacts are provided by Asp-462, Asp-464, and Asp-466. Cys-810, Cys-884, Cys-891, and Cys-894 together coordinate Zn(2+).

The protein belongs to the RNA polymerase beta' chain family. The RNAP catalytic core consists of 2 alpha, 1 beta, 1 beta' and 1 omega subunit. When a sigma factor is associated with the core the holoenzyme is formed, which can initiate transcription. Mg(2+) is required as a cofactor. It depends on Zn(2+) as a cofactor.

It catalyses the reaction RNA(n) + a ribonucleoside 5'-triphosphate = RNA(n+1) + diphosphate. Functionally, DNA-dependent RNA polymerase catalyzes the transcription of DNA into RNA using the four ribonucleoside triphosphates as substrates. In Nitrobacter winogradskyi (strain ATCC 25391 / DSM 10237 / CIP 104748 / NCIMB 11846 / Nb-255), this protein is DNA-directed RNA polymerase subunit beta'.